Reading from the N-terminus, the 309-residue chain is 4-hydroxy-tetrahydrodipicolinate synthase (309 aa).

A pyruvate-binding site is contributed by threonine 51. The active-site Proton donor/acceptor is tyrosine 140. The Schiff-base intermediate with substrate role is filled by lysine 168. Isoleucine 209 contacts pyruvate.

It belongs to the DapA family. As to quaternary structure, homotetramer; dimer of dimers.

It is found in the cytoplasm. It carries out the reaction L-aspartate 4-semialdehyde + pyruvate = (2S,4S)-4-hydroxy-2,3,4,5-tetrahydrodipicolinate + H2O + H(+). The protein operates within amino-acid biosynthesis; L-lysine biosynthesis via DAP pathway; (S)-tetrahydrodipicolinate from L-aspartate: step 3/4. Functionally, catalyzes the condensation of (S)-aspartate-beta-semialdehyde [(S)-ASA] and pyruvate to 4-hydroxy-tetrahydrodipicolinate (HTPA). This is 4-hydroxy-tetrahydrodipicolinate synthase from Streptococcus uberis (strain ATCC BAA-854 / 0140J).